We begin with the raw amino-acid sequence, 462 residues long: Cysteine--tRNA ligase (462 aa).

Cysteine 28 provides a ligand contact to Zn(2+). The 'HIGH' region signature appears at 30–40 (VTIYDLCHIGH). 3 residues coordinate Zn(2+): cysteine 211, histidine 236, and glutamate 240. A 'KMSKS' region motif is present at residues 268–272 (KMSKS). Lysine 271 is an ATP binding site.

Belongs to the class-I aminoacyl-tRNA synthetase family. Monomer. Zn(2+) is required as a cofactor.

The protein localises to the cytoplasm. The enzyme catalyses tRNA(Cys) + L-cysteine + ATP = L-cysteinyl-tRNA(Cys) + AMP + diphosphate. In Aliivibrio salmonicida (strain LFI1238) (Vibrio salmonicida (strain LFI1238)), this protein is Cysteine--tRNA ligase.